Reading from the N-terminus, the 293-residue chain is MNTEPSSAGPEPASLQRIALSLQYDGSSFCGWQRQRNGRSVQAVLEDAIAQLDPHRPVQTFAAGRTDAGVHAAGQVVHFDCSGPIPARKWAPALNGRLPSTIRVRESVARPLDWHACYSATYRRYRYTIHNGRRPNLFLSPWSWHCYQHRLDESRMRDALSSMLGLHDFSAFMKAGSRRAHARTTVQEVLVERQGDLLRVEIQASGFLYGMVRLLMAQLVAVGEHRLSVAAFEQRWRERRRHEVKEAAPAAGLCLLRAGYAKPIFTKAGWYDSQPWFFLAESDPPTDPPSTPG.

The active-site Nucleophile is Asp67. Substrate is bound at residue Tyr125.

This sequence belongs to the tRNA pseudouridine synthase TruA family. In terms of assembly, homodimer.

The catalysed reaction is uridine(38/39/40) in tRNA = pseudouridine(38/39/40) in tRNA. Its function is as follows. Formation of pseudouridine at positions 38, 39 and 40 in the anticodon stem and loop of transfer RNAs. This Synechococcus sp. (strain CC9605) protein is tRNA pseudouridine synthase A.